Consider the following 157-residue polypeptide: MGVIEFLLALAQDMILAAIPAVGFAMVFNVPVQALRWCALLGSIGHGSRMILMTSGLNIEWSTFMASMLVGTIGIQWSRWYLAHPKVFTVAAVIPMFPGISAYTAMISAVKISQLGYSEPLMITLLTNFLTASSIVGALSVDLSIPGLWLYRKRPRV.

4 helical membrane passes run 15–35 (ILAAIPAVGFAMVFNVPVQAL), 50–70 (MILMTSGLNIEWSTFMASMLV), 87–107 (VFTVAAVIPMFPGISAYTAMI), and 121–141 (LMITLLTNFLTASSIVGALSV).

It belongs to the ThrE exporter (TC 2.A.79) family. As to quaternary structure, the transporter is composed of YjjB and YjjP.

The protein resides in the cell inner membrane. Involved in succinate export with YjjP. Both proteins are required for export. This is Probable succinate transporter subunit YjjB from Shigella dysenteriae serotype 1 (strain Sd197).